We begin with the raw amino-acid sequence, 432 residues long: Protein prenyltransferase alpha subunit repeat-containing protein 1-A (432 aa).

6 PFTA repeats span residues 86–119 (ELIDVTCTLLLLNPDFTTAWNVRKELIQSGTLNP), 121–154 (KDLQLGKLALTKFPKSPETWIHRRWALQRLVQEL), 179–212 (EEMHVCCEAAGRYPSNYNSWSHRIWVVQHLGNLK), 218–251 (DELSSTKHWVSMHVSDHSGFHYRQFLLKSLLSKT), 294–327 (EEMDLNRELVDSFPGHETLWCHRRQIFNLIHQLL), and 395–432 (SFDSELRFINCVLTNCCSPEQSRFAASYRKWLLSLQGH).

The protein belongs to the protein prenyltransferase subunit alpha family.

This Xenopus laevis (African clawed frog) protein is Protein prenyltransferase alpha subunit repeat-containing protein 1-A (ptar1-a).